The sequence spans 85 residues: Large ribosomal subunit protein bL27 (85 aa).

Residues 1 to 22 are disordered; the sequence is MAHKKAGGSTNNGRDSESKRLG.

This sequence belongs to the bacterial ribosomal protein bL27 family.

The polypeptide is Large ribosomal subunit protein bL27 (Vibrio atlanticus (strain LGP32) (Vibrio splendidus (strain Mel32))).